The chain runs to 207 residues: C-type lectin domain family 2 member D11 (207 aa).

Topologically, residues 1-44 (MSAKKASQPMLNTTGSLQEGEMGKMFHGKCLRIVSPESPAKLYC) are cytoplasmic. Phosphoserine is present on residues Ser-7 and Ser-16. A helical; Signal-anchor for type II membrane protein membrane pass occupies residues 45–65 (CYGVIMVLSVAVVALSVALSV). Residues 66–207 (KMTPQISTIN…LQCKTPFSPM (142 aa)) lie on the Extracellular side of the membrane. A C-type lectin domain is found at 87 to 198 (VGNKCFYFSE…SCSKLNSYSL (112 aa)). Asn-100 is a glycosylation site (N-linked (GlcNAc...) asparagine).

It localises to the cell membrane. Receptor for KLRB1B that protects target cells against natural killer cell-mediated lysis. The polypeptide is C-type lectin domain family 2 member D11 (Clec2d11) (Rattus norvegicus (Rat)).